The chain runs to 389 residues: MIVKISWPKNNITSECFRRFGSFKRRSKSKKMSAFIEETKSLLPRIAFIACGCFSPPTPMHLRMFEIAKDHFEMQGTHRVVGGIISPTHDSYGKKGLASALDRCAMVKLATQSSNWIRLSDWEVHQNQWMRTQAVLQHHQNYINNHINSGGGGGDDGENTHLPGWLPRGLHDSRDPVHLKLLCGADLLESFAVPGLWAEADIEDIVANHGLVVITRAGSNPGKFIFDSDILTKYQSNITLITNWVPNEVSSTLIRRLLGRGQSVKYLLDDLVLEYIKRQRLFNFKSKYITDAVRPNHLLFNHAYTDNNKNANSYSIGDQLEQDMDESDTPSPQLQHTPTSRVFCCGEVPLRGSKVLRSGPGQAVQVITMQADEKEESQAKKQKISQVQL.

The short motif at 380-383 (KKQK) is the Nuclear localization signal element.

This sequence belongs to the eukaryotic NMN adenylyltransferase family. Abundantly expressed in neuronal and muscle cells. Present at relatively low levels at the neuromuscular junction. Expressed in the eye; present in photoreceptor cells and various neurons in the lamina cortex and medulla cortex and at low levels in the lamina.

The protein localises to the nucleus. It is found in the cytoplasm. Its subcellular location is the presynaptic active zone. It carries out the reaction beta-nicotinamide D-ribonucleotide + ATP + H(+) = diphosphate + NAD(+). It catalyses the reaction nicotinate beta-D-ribonucleotide + ATP + H(+) = deamido-NAD(+) + diphosphate. The protein operates within cofactor biosynthesis; NAD(+) biosynthesis; NAD(+) from nicotinamide D-ribonucleotide: step 1/1. It functions in the pathway cofactor biosynthesis; NAD(+) biosynthesis; deamido-NAD(+) from nicotinate D-ribonucleotide: step 1/1. Functionally, catalyzes the formation of NAD(+) from nicotinamide mononucleotide (NMN) and ATP. Essential for viability. Stress-response chaperone protein that prevents toxic aggregation of proteins and promotes proteasome-mediated degradation of misfolded proteins; this is independent of its NAD(+) synthesis activity. Neuroprotective in response to toxic protein aggregation, for example by overexpressed Atx-1/ataxin-1. Required for maintenance and integrity of mature neurons, protecting them from neuronal activity-induced neurodegeneration. Required for the maintenance of axonal and dendritic integrity in both central and peripheral neurons. Chaperone function and neuroprotective roles are largely independent of NAD(+) synthesis activity. Catalyzes the formation of NAD(+) from nicotinamide mononucleotide (NMN) and ATP. Has, or stimulates, chaperone holdase activity but not refoldase activity. Does not have neuroprotective properties and may stimulate apoptosis and neurodegeneration in response to toxic protein aggregates. In terms of biological role, catalyzes the formation of NAD(+) from nicotinamide mononucleotide (NMN) and ATP. Has, or stimulates, chaperone holdase and refoldase activity. Neuroprotective and reduces the toxic load of protein aggregates, preventing apoptosis and neurodegeneration. Promotes clearance of nuclear misfolded protein aggregates. The sequence is that of Nicotinamide-nucleotide adenylyltransferase from Drosophila melanogaster (Fruit fly).